The following is a 290-amino-acid chain: SEYRQKRTVGEEVTTDMRHVDESHFLTTTHEAYKPIDPSEYRQKRTVGEEVTTDMRHVDESHFLTTTHEAYKPIDPSEYRQKRTVGEEVTTDMRHVDESHFLTTTHEAYKPIDPSEYRQKRTVGEEVTTDMRHVDESHFLTTTHEAYKPIDPSEYRQKRTVGEEVTTNMRHVDESHFLTTTHEAYKPIDPSEYRQKRTVGEEVTTDMRHVDESHFLTTTHEAYKPIDPSEYRQKRTVGEEVTTDMRHVDESHFLTTTHEAYKPIDPSEYRQKRTVGEEVTTDMRHVDESH.

Repeats lie at residues 1–38, 39–76, 77–114, 115–152, 153–190, 191–228, 229–266, and 267–290; these read SEYR…PIDP and SEYR…DESH. The segment at 251–290 is disordered; the sequence is SHFLTTTHEAYKPIDPSEYRQKRTVGEEVTTDMRHVDESH. The segment covering 259 to 290 has biased composition (basic and acidic residues); the sequence is EAYKPIDPSEYRQKRTVGEEVTTDMRHVDESH.

The protein resides in the cytoplasm. The protein localises to the cytoskeleton. The sequence is that of Microtubule-associated protein P320 from Trypanosoma brucei brucei.